Consider the following 119-residue polypeptide: Large ribosomal subunit protein bL20 (119 aa).

The protein belongs to the bacterial ribosomal protein bL20 family.

In terms of biological role, binds directly to 23S ribosomal RNA and is necessary for the in vitro assembly process of the 50S ribosomal subunit. It is not involved in the protein synthesizing functions of that subunit. The chain is Large ribosomal subunit protein bL20 from Bradyrhizobium diazoefficiens (strain JCM 10833 / BCRC 13528 / IAM 13628 / NBRC 14792 / USDA 110).